The primary structure comprises 186 residues: uncharacterized protein (186 aa).

This is an uncharacterized protein from Haemophilus influenzae (strain ATCC 51907 / DSM 11121 / KW20 / Rd).